An 89-amino-acid polypeptide reads, in one-letter code: Small ribosomal subunit protein uS15 (89 aa).

Over residues 1–11 (MSITAERKAEV) the composition is skewed to basic and acidic residues. The tract at residues 1 to 25 (MSITAERKAEVIKTNARKSGDTGSP) is disordered.

This sequence belongs to the universal ribosomal protein uS15 family. As to quaternary structure, part of the 30S ribosomal subunit. Forms a bridge to the 50S subunit in the 70S ribosome, contacting the 23S rRNA.

Its function is as follows. One of the primary rRNA binding proteins, it binds directly to 16S rRNA where it helps nucleate assembly of the platform of the 30S subunit by binding and bridging several RNA helices of the 16S rRNA. Forms an intersubunit bridge (bridge B4) with the 23S rRNA of the 50S subunit in the ribosome. This is Small ribosomal subunit protein uS15 from Nitrobacter hamburgensis (strain DSM 10229 / NCIMB 13809 / X14).